A 345-amino-acid chain; its full sequence is UDP-N-acetylenolpyruvoylglucosamine reductase (345 aa).

An FAD-binding PCMH-type domain is found at valine 59–proline 254. Arginine 209 is a catalytic residue. The active-site Proton donor is cysteine 258. The active site involves glutamate 328.

This sequence belongs to the MurB family. FAD is required as a cofactor.

It is found in the cytoplasm. The catalysed reaction is UDP-N-acetyl-alpha-D-muramate + NADP(+) = UDP-N-acetyl-3-O-(1-carboxyvinyl)-alpha-D-glucosamine + NADPH + H(+). Its pathway is cell wall biogenesis; peptidoglycan biosynthesis. Cell wall formation. The protein is UDP-N-acetylenolpyruvoylglucosamine reductase of Syntrophobacter fumaroxidans (strain DSM 10017 / MPOB).